The chain runs to 40 residues: Photosystem II reaction center protein J (40 aa).

A helical transmembrane segment spans residues 8–28 (IPLWIIGTVTGILVIGLVGIF).

This sequence belongs to the PsbJ family. PSII is composed of 1 copy each of membrane proteins PsbA, PsbB, PsbC, PsbD, PsbE, PsbF, PsbH, PsbI, PsbJ, PsbK, PsbL, PsbM, PsbT, PsbX, PsbY, PsbZ, Psb30/Ycf12, at least 3 peripheral proteins of the oxygen-evolving complex and a large number of cofactors. It forms dimeric complexes.

It localises to the plastid. The protein localises to the chloroplast thylakoid membrane. In terms of biological role, one of the components of the core complex of photosystem II (PSII). PSII is a light-driven water:plastoquinone oxidoreductase that uses light energy to abstract electrons from H(2)O, generating O(2) and a proton gradient subsequently used for ATP formation. It consists of a core antenna complex that captures photons, and an electron transfer chain that converts photonic excitation into a charge separation. This is Photosystem II reaction center protein J from Jasminum nudiflorum (Winter jasmine).